A 540-amino-acid polypeptide reads, in one-letter code: Transcription termination/antitermination protein NusA (540 aa).

The region spanning 144-214 is the S1 motif domain; that stretch reads GQVIEARVED…SMWPITLSRS (71 aa). In terms of domain architecture, KH spans 319 to 386; sequence DTSIEIVVPA…QGIFGIKKRR (68 aa). The disordered stretch occupies residues 457–540; sequence VAAPTPTPAP…KQTFDNFDDL (84 aa). The segment covering 461–489 has biased composition (pro residues); it reads TPTPAPQPTPAPTKVEPVPPPVSVTPKPI. Residues 512–522 show a composition bias toward basic and acidic residues; sequence DDSKTKPEKSS. Over residues 523-540 the composition is skewed to polar residues; it reads AKTNTPQTKQTFDNFDDL.

The protein belongs to the NusA family. Monomer. Binds directly to the core enzyme of the DNA-dependent RNA polymerase and to nascent RNA.

Its subcellular location is the cytoplasm. Its function is as follows. Participates in both transcription termination and antitermination. This is Transcription termination/antitermination protein NusA from Mycoplasma pneumoniae (strain ATCC 29342 / M129 / Subtype 1) (Mycoplasmoides pneumoniae).